The following is a 251-amino-acid chain: Ubiquinone/menaquinone biosynthesis C-methyltransferase UbiE (251 aa).

S-adenosyl-L-methionine is bound by residues T74, D95, 123 to 124, and S140; that span reads NA.

Belongs to the class I-like SAM-binding methyltransferase superfamily. MenG/UbiE family.

It carries out the reaction a 2-demethylmenaquinol + S-adenosyl-L-methionine = a menaquinol + S-adenosyl-L-homocysteine + H(+). The catalysed reaction is a 2-methoxy-6-(all-trans-polyprenyl)benzene-1,4-diol + S-adenosyl-L-methionine = a 5-methoxy-2-methyl-3-(all-trans-polyprenyl)benzene-1,4-diol + S-adenosyl-L-homocysteine + H(+). It functions in the pathway quinol/quinone metabolism; menaquinone biosynthesis; menaquinol from 1,4-dihydroxy-2-naphthoate: step 2/2. It participates in cofactor biosynthesis; ubiquinone biosynthesis. Methyltransferase required for the conversion of demethylmenaquinol (DMKH2) to menaquinol (MKH2) and the conversion of 2-polyprenyl-6-methoxy-1,4-benzoquinol (DDMQH2) to 2-polyprenyl-3-methyl-6-methoxy-1,4-benzoquinol (DMQH2). In Cronobacter sakazakii (strain ATCC BAA-894) (Enterobacter sakazakii), this protein is Ubiquinone/menaquinone biosynthesis C-methyltransferase UbiE.